Here is a 367-residue protein sequence, read N- to C-terminus: Centromere protein L (367 aa).

It belongs to the CENP-L/IML3 family.

The protein resides in the nucleus. It localises to the chromosome. Its subcellular location is the centromere. Functionally, probable component of a centromeric complex involved in assembly of kinetochore proteins, mitotic progression and chromosome segregation. This is Centromere protein L (cenpl) from Danio rerio (Zebrafish).